Here is a 2845-residue protein sequence, read N- to C-terminus: Adenomatous polyposis coli protein (2845 aa).

Residue A2 is modified to N-acetylalanine. A coiled-coil region spans residues 2 to 61; it reads AAASYDQLLKQVEALKMENSNLRQELEDNSNHLTKLETEASNMKEVLKQLQGSIEDETMT. Phosphoserine occurs at positions 105 and 109. Residues 125–245 adopt a coiled-coil conformation; that stretch reads SRESTGYLEE…QAAEAERSSQ (121 aa). Residues 238–304 form a disordered region; sequence AEAERSSQSR…THSAPRRLTS (67 aa). The span at 239-263 shows a compositional bias: basic and acidic residues; that stretch reads EAERSSQSRHDAASHEAGRQHEGHG. Residues 266–279 show a composition bias toward polar residues; that stretch reads ESNTAASSSGQSPA. 7 ARM repeats span residues 451 to 493, 503 to 545, 546 to 589, 590 to 636, 637 to 681, 682 to 723, and 724 to 765; these read LMKL…HYSV, LTNL…IASV, LRNL…VLSA, LWNL…GGGI, LRNV…ACGT, LWNL…SAAA, and LRNL…LDAQ. A phosphoserine mark is found at S742, S746, and S778. The tract at residues 828–873 is disordered; it reads VLPSSSSSRGSLDSSRSEKDRSLERERGIGLSAYHPTTENAGTSSK. Low complexity predominate over residues 831–841; it reads SSSSSRGSLDS. A compositionally biased stretch (basic and acidic residues) spans 842–855; it reads SRSEKDRSLERERG. Residues 862–873 are compositionally biased toward polar residues; that stretch reads HPTTENAGTSSK. Residue S906 is modified to Phosphoserine. Disordered stretches follow at residues 921 to 942 and 956 to 986; these read RRSS…ENSN and RSSN…SYSE. Residues 927 to 942 show a composition bias toward polar residues; that stretch reads HTHSNTYNFTKSENSN. Positions 959-969 are enriched in low complexity; sequence NDSLNSVTSSD. 3 positions are modified to phosphoserine: S985, S1036, and S1040. The segment at 1018–1168 is interaction with catenins; sequence ELDTPINYSL…TNYSIKYNEE (151 aa). Disordered stretches follow at residues 1058–1079, 1092–1168, 1189–1247, and 1307–1375; these read IKQN…YSEN, GQQE…YNEE, SQKP…GTTC, and ENDV…PEHY. 2 stretches are compositionally biased toward polar residues: residues 1066-1078 and 1103-1128; these read ARSQ…VYSE and RGTS…QSLC. Over residues 1189–1204 the composition is skewed to low complexity; the sequence is SQKPSFSFSKNSSAQS. Polar residues predominate over residues 1211-1245; sequence SPSSENTAVPPSNAKRQNQLRPSSAQRNGQTQKGT. Residues 1354 to 1365 show a composition bias toward low complexity; it reads SSGAKSPSKSGA. A phosphoserine mark is found at S1359, S1370, S1384, S1391, and S1394. Disordered regions lie at residues 1400 to 1474, 1525 to 1568, 1587 to 1606, 1746 to 2010, and 2042 to 2069; these read IASS…VNAA, PPVQ…SDDD, RKAK…VARK, DQVQ…APKS, and ISSA…KVGG. T1437 bears the Phosphothreonine mark. The span at 1447-1465 shows a compositional bias: basic and acidic residues; the sequence is AKREVPKSKVPAAEKRESG. Positions 1532-1546 are enriched in acidic residues; that stretch reads NGNETESEQPEESNE. Residues 1547-1562 show a composition bias toward basic and acidic residues; sequence NQDKEVEKPDSEKDLL. Position 1565 is a phosphoserine (S1565). Polar residues predominate over residues 1747–1762; that stretch reads QVQQASSTSSGANKNQ. Residue S1772 is modified to Phosphoserine. A compositionally biased stretch (basic and acidic residues) spans 1783 to 1792; it reads YRTRVRKNTD. Phosphoserine occurs at positions 1859, 1861, and 1862. The interval 1864 to 1891 is highly charged; that stretch reads DFDDDDVDLSREKAELRKGKESKDSEAK. Residues 1871–1894 are compositionally biased toward basic and acidic residues; it reads DLSREKAELRKGKESKDSEAKVTC. Residues 1900–1911 are compositionally biased toward low complexity; that stretch reads SSQQAASKSQAS. The segment covering 1927 to 1936 has biased composition (polar residues); it reads KQPTFPQSSK. Over residues 1937-1949 the composition is skewed to basic and acidic residues; sequence DGPDRGAATDEKL. Phosphoserine is present on residues S1969 and S1971. Over residues 1979-1990 the composition is skewed to basic and acidic residues; the sequence is NNKESEPIKEAE. Residues 2034-2058 are interaction with AXIN1; that stretch reads EDDLLQECISSAMPKKKRPSRLKSE. S2087, S2092, S2125, S2129, S2130, and S2132 each carry phosphoserine. 3 disordered regions span residues 2146–2190, 2202–2652, and 2664–2845; these read SPFH…GIKG, KIRS…PPVS, and CPIN…VTSV. T2151 carries the post-translational modification Phosphothreonine. The interval 2167 to 2674 is basic region; it reads ILKPGEKSTL…PINNPRSGRS (508 aa). A compositionally biased stretch (basic and acidic residues) spans 2169–2187; that stretch reads KPGEKSTLEAKKIESENKG. 2 stretches are compositionally biased toward polar residues: residues 2203–2223 and 2257–2272; these read IRSN…NMPS and ASKS…TSPR. A phosphoserine mark is found at S2260, S2270, and S2283. Low complexity predominate over residues 2290-2311; it reads SQISGSNKGSSRSGSRDSTPSR. Positions 2312 to 2331 are enriched in polar residues; sequence PTQQPLSRPMQSPGRNSISP. The segment covering 2348-2369 has biased composition (low complexity); that stretch reads TSSPSTASTKSSGSGKMSYTSP. Polar residues predominate over residues 2370–2411; that stretch reads GRQLSQQNLTKQASLSKNASSIPRSESASKGLNQMSNGNGSN. Low complexity-rich tracts occupy residues 2417 to 2429 and 2459 to 2477; these read SRMS…GSES and SASF…PTRS. 2 positions are modified to phosphoserine: S2473 and S2535. The segment at 2475–2845 is interaction with DLG1; the sequence is TRSQAQTPVL…HSGSYLVTSV (371 aa). Over residues 2518–2535 the composition is skewed to basic and acidic residues; the sequence is NDGRPTKRHDIARSHSES. Over residues 2555–2568 the composition is skewed to polar residues; sequence SSSLPRVSTWRRTG. S2569 is subject to Phosphoserine. The span at 2569-2579 shows a compositional bias: low complexity; the sequence is SSSSILSASSE. The span at 2580–2592 shows a compositional bias: basic and acidic residues; that stretch reads SSEKAKSEDERHV. Low complexity predominate over residues 2626-2638; it reads ASQSASSGAASGA. Positions 2668-2679 are enriched in polar residues; it reads NPRSGRSPTGNT. Residues S2671 and S2674 each carry the phosphoserine modification. Residues 2674–2845 are interaction with MAPRE1; the sequence is SPTGNTPPVI…HSGSYLVTSV (172 aa). Position 2679 is a phosphothreonine (T2679). Residues 2684-2694 show a composition bias toward low complexity; that stretch reads DSVSEKGSSSI. Residues 2695-2705 show a composition bias toward basic and acidic residues; it reads KDSKDSKDTHG. Positions 2706–2716 are enriched in polar residues; the sequence is KQSVGSGSPVQ. S2713 and S2726 each carry phosphoserine. Over residues 2765–2776 the composition is skewed to low complexity; sequence SSSSSSKHSSPS. The segment covering 2786–2814 has biased composition (polar residues); the sequence is FNYNPSPRKSSADSTSARPSQIPTPVSTN. S2791 carries the post-translational modification Phosphoserine. Residues 2805 to 2808 carry the Microtubule tip localization signal motif; the sequence is SQIP. The PDZ-binding signature appears at 2843-2845; it reads TSV.

This sequence belongs to the adenomatous polyposis coli (APC) family. In terms of assembly, forms homooligomers. Found in a complex consisting of ARHGEF4, APC and CTNNB1. Found in a complex composed of MACF1, APC, AXIN1, CTNNB1 and GSK3B. The complex composed, at least, of APC, CTNNB1 and GSK3B interacts with JPT1; the interaction requires the inactive form of GSK3B (phosphorylated at 'Ser-9'). Interacts with APC2. Interacts with DLG1 (via PDZ domains) and DLG3 (via PDZ domains). Interacts with alpha- and beta-catenins. Interacts with AXIN1 (via RGS domain). Interacts with ARHGEF4 (via N-terminus). Interacts (via C-terminal residues 2674-2843) with MAPRE1 (via C-terminal residues 206-211); the interaction inhibits association with and bundling of F-actin. Interacts with MAPRE2 and MAPRE3 (via C-terminus). Interacts with DIAPH1; DIAPH1 acts as a scaffold protein for MAPRE1 and APC to stabilize microtubules and promote cell migration. Interacts with DIAPH2. Interacts with SCRIB; may mediate targeting to adherens junctions of epithelial cells. Interacts with SPATA13 (via N-terminus and SH3 domain). Interacts with ASAP1 (via SH3 domain). Interacts (at the cell membrane) with AMER1 and AMER2 (via ARM repeats). Interacts with KHDRBS1. Interacts with actin; binds both to F-actin and actin filament bundles. Post-translationally, phosphorylated; phosphorylation enhances the F-actin bundling activity. Phosphorylated by GSK3B. Ubiquitinated, leading to its degradation by the proteasome. Ubiquitination is facilitated by Axin. Deubiquitinated by ZRANB1/TRABID. As to expression, expressed in liver, spleen, kidney, heart, lung, brain, stomach, intestine, testis and ovary.

It is found in the cell junction. It localises to the adherens junction. The protein resides in the cytoplasm. The protein localises to the cytoskeleton. Its subcellular location is the cell projection. It is found in the lamellipodium. It localises to the ruffle membrane. The protein resides in the cell membrane. Its function is as follows. Tumor suppressor. Promotes rapid degradation of CTNNB1 and participates in Wnt signaling as a negative regulator. APC activity is correlated with its phosphorylation state. Activates the GEF activity of SPATA13 and ARHGEF4. Plays a role in hepatocyte growth factor (HGF)-induced cell migration. Required for MMP9 up-regulation via the JNK signaling pathway in colorectal tumor cells. Associates with both microtubules and actin filaments, components of the cytoskeleton. Plays a role in mediating the organization of F-actin into ordered bundles. Functions downstream of Rho GTPases and DIAPH1 to selectively stabilize microtubules. Acts as a mediator of ERBB2-dependent stabilization of microtubules at the cell cortex. It is required for the localization of MACF1 to the cell membrane and this localization of MACF1 is critical for its function in microtubule stabilization. The chain is Adenomatous polyposis coli protein (Apc) from Mus musculus (Mouse).